A 423-amino-acid polypeptide reads, in one-letter code: Cyclin-dependent kinase 14 (423 aa).

Phosphoserine is present on residues S32, S49, and S88. The span at 49–64 (SENNACINFKTSSTGK) shows a compositional bias: polar residues. The interval 49–87 (SENNACINFKTSSTGKESPKVRRHSSPSSPTSPKFGKAD) is disordered. Positions 89–373 (YEKLEKLGEG…AQAALSHEYF (285 aa)) constitute a Protein kinase domain. ATP contacts are provided by residues 95–103 (LGEGSYATV) and K118. D210 (proton acceptor) is an active-site residue. The segment at 403–423 (ESMRAFGKNNSYGKSLSNSKH) is disordered. The span at 410 to 423 (KNNSYGKSLSNSKH) shows a compositional bias: polar residues.

This sequence belongs to the protein kinase superfamily. CMGC Ser/Thr protein kinase family. CDC2/CDKX subfamily. As to quaternary structure, found in a complex with LRP6, CCNY and CAPRIN2 during G2/M stage; CAPRIN2 functions as a scaffold for the complex by binding to CCNY via its N terminus and to CDK14 via its C terminus. Interacts with CCNY; CCNY mediates its recruitment to the plasma membrane and promotes phosphorylation of LRP6. Interacts with CCDN3 and CDKN1A. Interacts with SEPT8. Interacts with 14-3-3 proteina YWHAB, YWHAE, YWHAH and YWHAQ.

It localises to the cell membrane. The protein localises to the cytoplasm. The protein resides in the nucleus. The enzyme catalyses L-seryl-[protein] + ATP = O-phospho-L-seryl-[protein] + ADP + H(+). It catalyses the reaction L-threonyl-[protein] + ATP = O-phospho-L-threonyl-[protein] + ADP + H(+). With respect to regulation, serine/threonine-protein kinase activity is promoted by associated cyclins CCDN3 and CCNY and repressed by CDKN1A. Functionally, serine/threonine-protein kinase involved in the control of the eukaryotic cell cycle, whose activity is controlled by an associated cyclin. Acts as a cell-cycle regulator of Wnt signaling pathway during G2/M phase by mediating the phosphorylation of LRP6 at 'Ser-1490', leading to the activation of the Wnt signaling pathway. Acts as a regulator of cell cycle progression and cell proliferation via its interaction with CCDN3. Phosphorylates RB1 in vitro, however the relevance of such result remains to be confirmed in vivo. May also play a role in meiosis, neuron differentiation and may indirectly act as a negative regulator of insulin-responsive glucose transport. The sequence is that of Cyclin-dependent kinase 14 (CDK14) from Callithrix jacchus (White-tufted-ear marmoset).